The following is a 541-amino-acid chain: Ankyrin repeat domain-containing protein 13C (541 aa).

The segment covering methionine 1–glycine 20 has biased composition (basic and acidic residues). The tract at residues methionine 1 to lysine 53 is disordered. Residues aspartate 21–alanine 30 show a composition bias toward acidic residues. Positions alanine 37–glycine 52 are enriched in gly residues. 3 ANK repeats span residues proline 111–asparagine 142, histidine 143–valine 172, and glutamine 176–arginine 205. Residue serine 411 is modified to Phosphoserine.

The protein localises to the endoplasmic reticulum membrane. In terms of biological role, acts as a molecular chaperone for G protein-coupled receptors, regulating their biogenesis and exit from the ER. The protein is Ankyrin repeat domain-containing protein 13C (Ankrd13c) of Mus musculus (Mouse).